A 300-amino-acid polypeptide reads, in one-letter code: Neutral protease NprE (300 aa).

Asp-139 contributes to the Ca(2+) binding site. Position 143 (His-143) interacts with Zn(2+). Residue Glu-144 is part of the active site. Residues His-147 and Glu-167 each coordinate Zn(2+). Positions 178, 181, 183, and 186 each coordinate Ca(2+). The Proton donor role is filled by His-228.

Belongs to the peptidase M4 family. Ca(2+) is required as a cofactor. Zn(2+) serves as cofactor.

It is found in the secreted. The enzyme catalyses Similar, but not identical, to that of thermolysin.. Its function is as follows. Extracellular zinc metalloprotease. The polypeptide is Neutral protease NprE (nprE) (Bacillus pumilus (Bacillus mesentericus)).